The sequence spans 553 residues: MSYTTATADSDDGMHSSIHNESPAPDSISNGCRSRGKRSVLKKGPWTSTEDGILIDYVKKHGEGNWNAVQKHTSLARCGKSCRLRWANHLRPNLKKGAFSQEEEQLIVEMHAKMGNKWAQMAEHLPGRTDNEIKNYWNTRIKRRQRAGLPLYPPEIYVDDLHWSEEYTKSNIIRVDRRRRHQDFLQLGNSKDNVLFDDLNFAASLLPAASDLSDLVACNMLGTGASSSRYESYMPPILPSPKQIWESGSRFPMCSSNIKHEFQSPEHFQNTAVQKNPRSCSISPCDVDHHPYENQHSSHMMMVPDSHTVTYGMHPTSKPLFGAVKLELPSFQYSETSAFDQWKTTPSPPHSDLLDSVDAYIQSPPPSQVEESDCFSSCDTGLLDMLLHEAKIKTSAKHSLLMSSPQKSFSSTTCTTNVTQNVPRGSENLIKSGEYEDSQKYLGRSEITSPSQLSAGGFSSAFAGNVVKTEELDQVWEPKRVDITRPDVLLASSWLDQGCYGIVSDTSSMSDALALLGGDDIGNSYVTVGSSSGQAPRGVGSYGWTNMPPVWSL.

A disordered region spans residues 1–44 (MSYTTATADSDDGMHSSIHNESPAPDSISNGCRSRGKRSVLKKG). HTH myb-type domains lie at 38–90 (RSVL…ANHL) and 91–145 (RPNL…KRRQ). 2 consecutive DNA-binding regions (H-T-H motif) follow at residues 66-90 (WNAV…ANHL) and 118-141 (WAQM…NTRI).

In terms of tissue distribution, mostly expressed in roots (e.g. root tips), stems, pollen, shoot apices, flowers and floral shoot tips, and, to a lower extent, in leaves and siliques.

Its subcellular location is the nucleus. Its function is as follows. Transcriptional activator of alpha-amylase expression that binds to 5'-CAACTGTC-3' motif in target gene promoter. In vegetative tissues, inhibits growth by reducing cell proliferation. Promotes the expression of aleurone-related genes (e.g. CP1, CP, GASA1, BXL1 and BXL2) in seeds. Together with MYB33 and MYB101, promotes the programmed cell death (PCD) the vacuolation of protein storage vacuoles (PSVs) in the aleurone layers during seed germination. Together with MYB33, facilitates anther and tapetum development. The chain is Transcription factor MYB65 from Arabidopsis thaliana (Mouse-ear cress).